A 395-amino-acid polypeptide reads, in one-letter code: FAD-dependent monooxygenase cctM (395 aa).

A signal peptide spans 1–23 (MEPGTDVRRVLVIGAGAAGLLIA). Residues Glu37, Gly52, and Arg112 each coordinate FAD. Residues Asn138 and Asn298 are each glycosylated (N-linked (GlcNAc...) asparagine). Asp306 is an FAD binding site.

It belongs to the paxM FAD-dependent monooxygenase family. The cofactor is FAD.

The protein operates within mycotoxin biosynthesis. Its function is as follows. FAD-dependent monooxygenase; part of the gene cluster that mediates the biosynthesis of the mycotoxin cyclochlorotine, a hepatotoxic and carcinogenic cyclic chlorinated pentapeptide. The function of cctM within the pathway, if any, remains undetermined. The NRPS cctN initially catalyzes the condensation of L-serine (Ser), Pro, L-2-aminobutyrate (2Abu), Ser, and beta-Phe in this order to produce isocyclotine. After the dichlorination of Pro2 catalyzed by cctP2 to produce isocyclochlorotine, the cctO-mediated transacylation of isocyclochlorotine can furnish cyclochlorotine. The subsequent hydroxylation of cyclochlorotine by cctR yields hydroxycyclochlorotine as the final product. CctP1 probably acts as a phenylalanine aminomutase and provides the uncommon building block beta-Phe. Furthermore, 2Abu can be synthesized from threonine by one of the threonine dehydratases and transaminases localized outside of the cluster. The functions of the remaining proteins encoded by the cluster, cctM and cctT, have not been identified yet. The chain is FAD-dependent monooxygenase cctM from Talaromyces islandicus (Penicillium islandicum).